Reading from the N-terminus, the 551-residue chain is Structure-specific endonuclease subunit MUS81 (551 aa).

Disordered stretches follow at residues 85–131 (LASG…AGYW) and 231–255 (PEEH…EVGV). Ser-95 carries the phosphoserine modification. Polar residues predominate over residues 110–131 (VQGSSMPVPTQPQAGSTNAGYW). An interaction with BLM region spans residues 124-243 (GSTNAGYWPA…HHEESPVPEA (120 aa)). The interval 131-230 (WPAQNSGARE…GLSTLNTAFQ (100 aa)) is winged helix domain (WHD); critical for endonuclease activity. The 103-residue stretch at 270–372 (LLCVDIGETR…HRIYLVEEHG (103 aa)) folds into the ERCC4 domain. Residues Asp-274, Glu-277, and Asp-307 contribute to the active site. Mg(2+) contacts are provided by Asp-274, Glu-277, Asp-307, Glu-333, and Arg-334. The helix-hairpin-helix (2HhH); involved in DNA recognition and bending stretch occupies residues 471-545 (VREVFARQLM…LSRTLYQLYC (75 aa)).

This sequence belongs to the XPF family. Part of the heterodimeric DNA structure-specific endonuclease complex MUS81-EME1. Part of the heterodimeric DNA structure-specific endonuclease complex MUS81-EME2. Interacts with BLM; may stimulate the endonuclease activity of MUS81. Interacts with SLX4/BTBD12; this interaction is direct and links the MUS81-EME1 complex to SLX4, which may coordinate the action of the structure-specific endonuclease during DNA repair. Interacts with DCLRE1B/Apollo. Interacts with RECQL5; this interaction stimulates mitotic DNA synthesis. Interacts with CHEK2. Mg(2+) is required as a cofactor.

The protein localises to the nucleus. It localises to the nucleolus. Its function is as follows. Catalytic subunit of two functionally distinct, structure-specific, heterodimeric DNA endonucleases MUS81-EME1 and MUS81-EME2 that are involved in the maintenance of genome stability. Both endonucleases have essentially the same substrate specificity though MUS81-EME2 is more active than its MUS81-EME1 counterpart. Both cleave 3'-flaps and nicked Holliday junctions, and exhibit limited endonuclease activity with 5' flaps and nicked double-stranded DNAs. MUS81-EME2 which is active during the replication of DNA is more specifically involved in replication fork processing. Replication forks frequently encounter obstacles to their passage, including DNA base lesions, DNA interstrand cross-links, difficult-to-replicate sequences, transcription bubbles, or tightly bound proteins. One mechanism for the restart of a stalled replication fork involves nucleolytic cleavage mediated by the MUS81-EME2 endonuclease. By acting upon the stalled fork, MUS81-EME2 generates a DNA double-strand break (DSB) that can be repaired by homologous recombination, leading to the restoration of an active fork. MUS81-EME2 could also function in telomere maintenance. MUS81-EME1, on the other hand, is active later in the cell cycle and functions in the resolution of mitotic recombination intermediates including the Holliday junctions, the four-way DNA intermediates that form during homologous recombination. In Rattus norvegicus (Rat), this protein is Structure-specific endonuclease subunit MUS81.